The sequence spans 452 residues: Pup--protein ligase (452 aa).

E9 is a Mg(2+) binding site. Residue R53 participates in ATP binding. Y55 is a binding site for Mg(2+). D57 serves as the catalytic Proton acceptor. A Mg(2+)-binding site is contributed by E63. T66 and W419 together coordinate ATP.

It belongs to the Pup ligase/Pup deamidase family. Pup-conjugating enzyme subfamily.

It catalyses the reaction ATP + [prokaryotic ubiquitin-like protein]-L-glutamate + [protein]-L-lysine = ADP + phosphate + N(6)-([prokaryotic ubiquitin-like protein]-gamma-L-glutamyl)-[protein]-L-lysine.. It functions in the pathway protein degradation; proteasomal Pup-dependent pathway. The protein operates within protein modification; protein pupylation. In terms of biological role, catalyzes the covalent attachment of the prokaryotic ubiquitin-like protein modifier Pup to the proteasomal substrate proteins, thereby targeting them for proteasomal degradation. This tagging system is termed pupylation. The ligation reaction involves the side-chain carboxylate of the C-terminal glutamate of Pup and the side-chain amino group of a substrate lysine. This is Pup--protein ligase from Parafrankia sp. (strain EAN1pec).